A 162-amino-acid polypeptide reads, in one-letter code: Ribosome maturation factor RimP (162 aa).

The protein belongs to the RimP family.

It is found in the cytoplasm. Required for maturation of 30S ribosomal subunits. The protein is Ribosome maturation factor RimP of Ralstonia pickettii (strain 12J).